Reading from the N-terminus, the 530-residue chain is 26S proteasome non-ATPase regulatory subunit 3 (530 aa).

The span at Met1–Lys16 shows a compositional bias: basic and acidic residues. Positions Met1–Thr65 are disordered. The segment covering Pro17–Pro30 has biased composition (pro residues). A Glycyl lysine isopeptide (Lys-Gly) (interchain with G-Cter in SUMO1); alternate cross-link involves residue Lys36. Residue Lys36 forms a Glycyl lysine isopeptide (Lys-Gly) (interchain with G-Cter in SUMO2); alternate linkage. The PCI domain maps to Ala282–Asp461. 2 positions are modified to phosphoserine: Ser414 and Ser426. The interval Ser496–Pro530 is disordered. The segment covering Tyr497–Met521 has biased composition (basic and acidic residues).

Belongs to the proteasome subunit S3 family. As to quaternary structure, component of the 19S proteasome regulatory particle complex. The 26S proteasome consists of a 20S core particle (CP) and two 19S regulatory subunits (RP). The regulatory particle is made of a lid composed of 9 subunits including PSMD3, a base containing 6 ATPases and few additional components. Interacts with UBQLN1 (via ubiquitin-like domain). Interacts with ERCC6.

In terms of biological role, component of the 26S proteasome, a multiprotein complex involved in the ATP-dependent degradation of ubiquitinated proteins. This complex plays a key role in the maintenance of protein homeostasis by removing misfolded or damaged proteins, which could impair cellular functions, and by removing proteins whose functions are no longer required. Therefore, the proteasome participates in numerous cellular processes, including cell cycle progression, apoptosis, or DNA damage repair. The protein is 26S proteasome non-ATPase regulatory subunit 3 (Psmd3) of Mus musculus (Mouse).